The chain runs to 458 residues: Mannan endo-1,6-alpha-mannosidase DFG5 (458 aa).

An N-terminal signal peptide occupies residues 1 to 26 (MIVNISAKMILSICFTFLSFFKATHA). 9 N-linked (GlcNAc...) asparagine glycosylation sites follow: N89, N114, N138, N208, N231, N245, N270, N273, and N417. The interval 399-418 (PYKEDNGGTSKGDANAGMNS) is disordered. G437 is lipidated: GPI-anchor amidated glycine. A propeptide spans 438-458 (AAIITAVILSVLTGGAVWMLF) (removed in mature form).

This sequence belongs to the glycosyl hydrolase 76 family. N-glycosylated.

The protein resides in the cell membrane. The enzyme catalyses Random hydrolysis of (1-&gt;6)-alpha-D-mannosidic linkages in unbranched (1-&gt;6)-mannans.. Functionally, required for normal synthesis of the cell wall. This chain is Mannan endo-1,6-alpha-mannosidase DFG5 (DFG5), found in Saccharomyces cerevisiae (strain ATCC 204508 / S288c) (Baker's yeast).